The chain runs to 179 residues: Transmembrane protein 196 (179 aa).

Transmembrane regions (helical) follow at residues 11-31, 44-61, 67-87, and 100-120; these read LLVL…VGAV, LGDS…ILCA, LVMI…ILNF, and LYPL…GCTL.

The protein resides in the cytoplasm. The protein localises to the membrane. Acts as a tumor suppressor in lung cancer. Inhibits tumor cell growth by inhibiting cell proliferation and migration and promoting cell apoptosis. Inhibits metastasis of lung cancer by suppressing beta-catenin expression in the Wnt/beta-catenin signaling pathway. The sequence is that of Transmembrane protein 196 (TMEM196) from Pongo abelii (Sumatran orangutan).